The chain runs to 266 residues: Imidazole glycerol phosphate synthase subunit HisF (266 aa).

Active-site residues include Asp11 and Asp130.

Belongs to the HisA/HisF family. Heterodimer of HisH and HisF.

It is found in the cytoplasm. The enzyme catalyses 5-[(5-phospho-1-deoxy-D-ribulos-1-ylimino)methylamino]-1-(5-phospho-beta-D-ribosyl)imidazole-4-carboxamide + L-glutamine = D-erythro-1-(imidazol-4-yl)glycerol 3-phosphate + 5-amino-1-(5-phospho-beta-D-ribosyl)imidazole-4-carboxamide + L-glutamate + H(+). It participates in amino-acid biosynthesis; L-histidine biosynthesis; L-histidine from 5-phospho-alpha-D-ribose 1-diphosphate: step 5/9. In terms of biological role, IGPS catalyzes the conversion of PRFAR and glutamine to IGP, AICAR and glutamate. The HisF subunit catalyzes the cyclization activity that produces IGP and AICAR from PRFAR using the ammonia provided by the HisH subunit. The polypeptide is Imidazole glycerol phosphate synthase subunit HisF (Nitrosopumilus maritimus (strain SCM1)).